The following is a 433-amino-acid chain: Enolase (433 aa).

Glutamine 167 contributes to the (2R)-2-phosphoglycerate binding site. The active-site Proton donor is glutamate 209. Residues aspartate 246, glutamate 291, and aspartate 318 each coordinate Mg(2+). (2R)-2-phosphoglycerate-binding residues include lysine 343, arginine 372, serine 373, and lysine 394. The Proton acceptor role is filled by lysine 343.

This sequence belongs to the enolase family. Component of the RNA degradosome, a multiprotein complex involved in RNA processing and mRNA degradation. Requires Mg(2+) as cofactor.

Its subcellular location is the cytoplasm. The protein resides in the secreted. It localises to the cell surface. The enzyme catalyses (2R)-2-phosphoglycerate = phosphoenolpyruvate + H2O. Its pathway is carbohydrate degradation; glycolysis; pyruvate from D-glyceraldehyde 3-phosphate: step 4/5. Its function is as follows. Catalyzes the reversible conversion of 2-phosphoglycerate (2-PG) into phosphoenolpyruvate (PEP). It is essential for the degradation of carbohydrates via glycolysis. The protein is Enolase of Hamiltonella defensa subsp. Acyrthosiphon pisum (strain 5AT).